The chain runs to 193 residues: Ion-translocating oxidoreductase complex subunit A (193 aa).

The next 6 membrane-spanning stretches (helical) occupy residues 5–25 (LLLL…FLGL), 39–59 (VGMG…AYLV), 72–92 (LSTL…EMVI), 102–122 (ILGI…LALL), 134–154 (VVYG…FASL), and 170–190 (IAIG…FTGL).

Belongs to the NqrDE/RnfAE family. In terms of assembly, the complex is composed of six subunits: RnfA, RnfB, RnfC, RnfD, RnfE and RnfG.

The protein localises to the cell inner membrane. Functionally, part of a membrane-bound complex that couples electron transfer with translocation of ions across the membrane. This Tolumonas auensis (strain DSM 9187 / NBRC 110442 / TA 4) protein is Ion-translocating oxidoreductase complex subunit A.